Here is a 268-residue protein sequence, read N- to C-terminus: uncharacterized protein (268 aa).

Belongs to the LarE family.

This is an uncharacterized protein from Synechocystis sp. (strain ATCC 27184 / PCC 6803 / Kazusa).